Consider the following 162-residue polypeptide: Xanthine-guanine phosphoribosyltransferase (162 aa).

5-phospho-alpha-D-ribose 1-diphosphate-binding positions include 43 to 44 (RG) and 94 to 102 (DDLVDTGTT). Asp-95 is a binding site for Mg(2+). Guanine-binding residues include Asp-98 and Ile-141. The xanthine site is built by Asp-98 and Ile-141. GMP-binding positions include 98 to 102 (DTGTT) and 140 to 141 (WI).

It belongs to the purine/pyrimidine phosphoribosyltransferase family. XGPT subfamily. Homotetramer. Mg(2+) is required as a cofactor.

It localises to the cell inner membrane. It carries out the reaction GMP + diphosphate = guanine + 5-phospho-alpha-D-ribose 1-diphosphate. The enzyme catalyses XMP + diphosphate = xanthine + 5-phospho-alpha-D-ribose 1-diphosphate. The catalysed reaction is IMP + diphosphate = hypoxanthine + 5-phospho-alpha-D-ribose 1-diphosphate. It functions in the pathway purine metabolism; GMP biosynthesis via salvage pathway; GMP from guanine: step 1/1. Its pathway is purine metabolism; XMP biosynthesis via salvage pathway; XMP from xanthine: step 1/1. Functionally, purine salvage pathway enzyme that catalyzes the transfer of the ribosyl-5-phosphate group from 5-phospho-alpha-D-ribose 1-diphosphate (PRPP) to the N9 position of the 6-oxopurines guanine and xanthine to form the corresponding ribonucleotides GMP (guanosine 5'-monophosphate) and XMP (xanthosine 5'-monophosphate), with the release of PPi. To a lesser extent, also acts on hypoxanthine. This Oleidesulfovibrio alaskensis (strain ATCC BAA-1058 / DSM 17464 / G20) (Desulfovibrio alaskensis) protein is Xanthine-guanine phosphoribosyltransferase.